The sequence spans 415 residues: Homoserine O-succinyltransferase (415 aa).

Residues 1–26 show a composition bias toward polar residues; it reads MTSPALTAASVTPSRNTTSPDTTSHR. The interval 1-27 is disordered; the sequence is MTSPALTAASVTPSRNTTSPDTTSHRP. One can recognise an AB hydrolase-1 domain in the interval 71–386; the sequence is NAVLICHALN…HGHDAFLLED (316 aa). S177 functions as the Nucleophile in the catalytic mechanism. Residue R247 coordinates substrate. Active-site residues include D346 and H379. D380 provides a ligand contact to substrate.

It belongs to the AB hydrolase superfamily. MetX family. In terms of assembly, homodimer.

Its subcellular location is the cytoplasm. It catalyses the reaction L-homoserine + succinyl-CoA = O-succinyl-L-homoserine + CoA. It participates in amino-acid biosynthesis; L-methionine biosynthesis via de novo pathway; O-succinyl-L-homoserine from L-homoserine: step 1/1. Its function is as follows. Transfers a succinyl group from succinyl-CoA to L-homoserine, forming succinyl-L-homoserine. This is Homoserine O-succinyltransferase from Bordetella avium (strain 197N).